Reading from the N-terminus, the 110-residue chain is Large ribosomal subunit protein uL22 (110 aa).

It belongs to the universal ribosomal protein uL22 family. Part of the 50S ribosomal subunit.

Its function is as follows. This protein binds specifically to 23S rRNA; its binding is stimulated by other ribosomal proteins, e.g. L4, L17, and L20. It is important during the early stages of 50S assembly. It makes multiple contacts with different domains of the 23S rRNA in the assembled 50S subunit and ribosome. The globular domain of the protein is located near the polypeptide exit tunnel on the outside of the subunit, while an extended beta-hairpin is found that lines the wall of the exit tunnel in the center of the 70S ribosome. This chain is Large ribosomal subunit protein uL22, found in Dichelobacter nodosus (strain VCS1703A).